The sequence spans 453 residues: uncharacterized protein (453 aa).

A signal peptide spans 1 to 23 (MFLLQRFFIYGLFLACFYTTVFG). The Lumenal segment spans residues 24 to 137 (EKHFEAEEYR…EKQFSYSSGT (114 aa)). A helical transmembrane segment spans residues 138 to 158 (NGILATFLTAIPPNIFILLVP). The Cytoplasmic portion of the chain corresponds to 159-165 (KSFDTSM). Residues 166–186 (LNLFVAVSAGSLLGDVFLQLL) traverse the membrane as a helical segment. Residues 187–194 (PTVYSTNG) lie on the Lumenal side of the membrane. A helical transmembrane segment spans residues 195–215 (GDFPASSVYSILIGALVFFLM). Residues 216–358 (DKGIRILIHE…LRNGYTKSQV (143 aa)) lie on the Cytoplasmic side of the membrane. The span at 229–238 (SLSKPKKDGE) shows a compositional bias: basic and acidic residues. Positions 229–278 (SLSKPKKDGEETSSVNKPSASSTQTDVKGVEGLRKRNVKDDQNSKGHEPD) are disordered. Polar residues predominate over residues 240–254 (TSSVNKPSASSTQTD). Residues 256-278 (KGVEGLRKRNVKDDQNSKGHEPD) show a composition bias toward basic and acidic residues. A helical transmembrane segment spans residues 359–379 (LVLQMITMVTGLLGAIVATYI). Topologically, residues 380–399 (YTASSSSSPYGSFLLQLEDK) are lumenal. The helical transmembrane segment at 400-420 (LLPFTAGGFLYIAYLGVFPEL) threads the bilayer. At 421–432 (LEINLSKGKLGN) the chain is on the cytoplasmic side. Residues 433-453 (MIYTALYMMFIVGGFSFLYYV) form a helical membrane-spanning segment.

The protein belongs to the ZIP transporter (TC 2.A.5) family. KE4/Catsup subfamily.

It is found in the endoplasmic reticulum membrane. This is an uncharacterized protein from Schizosaccharomyces pombe (strain 972 / ATCC 24843) (Fission yeast).